The chain runs to 282 residues: Large ribosomal subunit protein uL2 (282 aa).

2 disordered regions span residues K31–I54 and L223–R282. Composition is skewed to basic residues over residues T34–I54 and V270–R282.

Belongs to the universal ribosomal protein uL2 family. In terms of assembly, part of the 50S ribosomal subunit. Forms a bridge to the 30S subunit in the 70S ribosome.

Its function is as follows. One of the primary rRNA binding proteins. Required for association of the 30S and 50S subunits to form the 70S ribosome, for tRNA binding and peptide bond formation. It has been suggested to have peptidyltransferase activity; this is somewhat controversial. Makes several contacts with the 16S rRNA in the 70S ribosome. This Anaeromyxobacter dehalogenans (strain 2CP-1 / ATCC BAA-258) protein is Large ribosomal subunit protein uL2.